Reading from the N-terminus, the 285-residue chain is Energy-coupling factor transporter ATP-binding protein EcfA2 (285 aa).

The ABC transporter domain maps to 6–242; that stretch reads LKVEELNYNY…KEVIRKVNLR (237 aa). 39–46 lines the ATP pocket; sequence GGNGVGKS.

Belongs to the ABC transporter superfamily. Energy-coupling factor EcfA family. In terms of assembly, forms a stable energy-coupling factor (ECF) transporter complex composed of 2 membrane-embedded substrate-binding proteins (S component), 2 ATP-binding proteins (A component) and 2 transmembrane proteins (T component).

Its subcellular location is the cell membrane. In terms of biological role, ATP-binding (A) component of a common energy-coupling factor (ECF) ABC-transporter complex. Unlike classic ABC transporters this ECF transporter provides the energy necessary to transport a number of different substrates. In Clostridium perfringens (strain SM101 / Type A), this protein is Energy-coupling factor transporter ATP-binding protein EcfA2.